The sequence spans 227 residues: Probable septum site-determining protein MinC (227 aa).

This sequence belongs to the MinC family. Interacts with MinD and FtsZ.

Cell division inhibitor that blocks the formation of polar Z ring septums. Rapidly oscillates between the poles of the cell to destabilize FtsZ filaments that have formed before they mature into polar Z rings. Prevents FtsZ polymerization. The protein is Probable septum site-determining protein MinC of Acetivibrio thermocellus (strain ATCC 27405 / DSM 1237 / JCM 9322 / NBRC 103400 / NCIMB 10682 / NRRL B-4536 / VPI 7372) (Clostridium thermocellum).